The following is a 196-amino-acid chain: Putative NADH dehydrogenase/NAD(P)H nitroreductase SCO5049 (196 aa).

Belongs to the nitroreductase family. HadB/RutE subfamily. FMN serves as cofactor.

The protein is Putative NADH dehydrogenase/NAD(P)H nitroreductase SCO5049 of Streptomyces coelicolor (strain ATCC BAA-471 / A3(2) / M145).